A 965-amino-acid polypeptide reads, in one-letter code: UvrABC system protein A (965 aa).

An ATP-binding site is contributed by 32–39 (GLSGSGKS). Residues 254–281 (CPVCDYSLPELEPRLFSFNAPMGACPAC) form a C4-type zinc finger. ABC transporter domains are found at residues 311 to 588 (WDRR…PRSL) and 608 to 937 (PNAT…HFLA). 641-648 (GVSGSGKS) provides a ligand contact to ATP. The segment at 740–766 (CEACEGDGLIKVEMHFLPDVYVPCDVC) adopts a C4-type zinc-finger fold.

The protein belongs to the ABC transporter superfamily. UvrA family. As to quaternary structure, forms a heterotetramer with UvrB during the search for lesions.

Its subcellular location is the cytoplasm. In terms of biological role, the UvrABC repair system catalyzes the recognition and processing of DNA lesions. UvrA is an ATPase and a DNA-binding protein. A damage recognition complex composed of 2 UvrA and 2 UvrB subunits scans DNA for abnormalities. When the presence of a lesion has been verified by UvrB, the UvrA molecules dissociate. The chain is UvrABC system protein A from Xylella fastidiosa (strain 9a5c).